Reading from the N-terminus, the 253-residue chain is Shikimate dehydrogenase (NADP(+)) (253 aa).

Shikimate is bound by residues 13–15 (SIS) and Thr-59. Lys-63 functions as the Proton acceptor in the catalytic mechanism. Glu-74 contacts NADP(+). Shikimate-binding residues include Asn-83 and Asp-94. Residues 115–119 (GAGGA), 139–144 (NRTIER), and Val-199 each bind NADP(+). Tyr-201 contacts shikimate. Gly-221 contacts NADP(+).

This sequence belongs to the shikimate dehydrogenase family. Homodimer.

It carries out the reaction shikimate + NADP(+) = 3-dehydroshikimate + NADPH + H(+). Its pathway is metabolic intermediate biosynthesis; chorismate biosynthesis; chorismate from D-erythrose 4-phosphate and phosphoenolpyruvate: step 4/7. Involved in the biosynthesis of the chorismate, which leads to the biosynthesis of aromatic amino acids. Catalyzes the reversible NADPH linked reduction of 3-dehydroshikimate (DHSA) to yield shikimate (SA). This is Shikimate dehydrogenase (NADP(+)) from Thermotoga maritima (strain ATCC 43589 / DSM 3109 / JCM 10099 / NBRC 100826 / MSB8).